Reading from the N-terminus, the 250-residue chain is Zinc finger protein lsy-27 (250 aa).

C2H2-type zinc fingers lie at residues 25-48 (FVCSSCSQNFQHSASLNRHRQLMH) and 52-75 (HTCMMCERALNQKETIREHMRNEH). The C2H2-type 3; degenerate zinc finger occupies 81–104 (FTCGCCNWTFASKRQLTEHTKCIQ). Disordered regions lie at residues 126–177 (IQST…EAER) and 226–250 (QKVKAEGPAVESKMIPEKHVKQEIE). Positions 148–165 (SLSPSSSVSTSISSRDAS) are enriched in low complexity. Positions 239–250 (MIPEKHVKQEIE) are enriched in basic and acidic residues.

In terms of biological role, involved in regulating left/right asymmetric differentiation of the gustatory ASE neurons. Plays a role in modulating expression of LIM/homeobox protein lim-6. This Caenorhabditis elegans protein is Zinc finger protein lsy-27.